A 302-amino-acid chain; its full sequence is MATETDLEELRRGSELVKRGFAKMQKGGVIMDVVNREQARIAEDVGAVAVMNLEAVPADIRKRGGVARMADPASLTGIIEEVSIPVMGKSRIGHRKEAEILQAVGADMIDESEVLTPADDEYHIDKREFTAPFVCGARNLGEALRRIDEGAAMIRTKGEAGTGDVNQAVHHQRNIKSAIRKLEGMDYEERDMWARDHEAPRELVHETAEMGRLPVVNFAAGGIATPADAALMMHHGCDGIFVGSGIFGAENPEAMGRAVVDAVNNHDDPERLAEIASNIGEGMQGDPNADLPEDERMQDRGN.

Asp32 is a D-ribose 5-phosphate binding site. Lys89 functions as the Schiff-base intermediate with D-ribose 5-phosphate in the catalytic mechanism. Residue Gly161 participates in D-ribose 5-phosphate binding. A D-glyceraldehyde 3-phosphate-binding site is contributed by Arg173. D-ribose 5-phosphate-binding positions include Gly222 and 243 to 244; that span reads GS. Residues 276–302 form a disordered region; the sequence is ASNIGEGMQGDPNADLPEDERMQDRGN.

It belongs to the PdxS/SNZ family. As to quaternary structure, in the presence of PdxT, forms a dodecamer of heterodimers.

It catalyses the reaction aldehydo-D-ribose 5-phosphate + D-glyceraldehyde 3-phosphate + L-glutamine = pyridoxal 5'-phosphate + L-glutamate + phosphate + 3 H2O + H(+). Its pathway is cofactor biosynthesis; pyridoxal 5'-phosphate biosynthesis. In terms of biological role, catalyzes the formation of pyridoxal 5'-phosphate from ribose 5-phosphate (RBP), glyceraldehyde 3-phosphate (G3P) and ammonia. The ammonia is provided by the PdxT subunit. Can also use ribulose 5-phosphate and dihydroxyacetone phosphate as substrates, resulting from enzyme-catalyzed isomerization of RBP and G3P, respectively. The polypeptide is Pyridoxal 5'-phosphate synthase subunit PdxS (Halobacterium salinarum (strain ATCC 29341 / DSM 671 / R1)).